Consider the following 130-residue polypeptide: MLGGGSDAGLATAAARGQVETVRQLLEAGADPNAVNRFGRRPIQVMMMGSAQVAELLLLHGAEPNCADPATLTRPVHDAAREGFLDTLMVLHKAGARLDVCDAWGRLPVDLAEEQGHRDIARYLHAATGD.

4 ANK repeats span residues 5-34 (GSDA…DPNA), 38-66 (FGRR…EPNC), 71-100 (TLTR…RLDV), and 104-130 (WGRL…ATGD). The residue at position 12 (threonine 12) is a Phosphothreonine.

This sequence belongs to the CDKN2 cyclin-dependent kinase inhibitor family. Heterodimer of CDKN2B with CDK4 or CDK6. In terms of tissue distribution, expression abundant in lung, less abundant in testis, barely detectable in liver, and not detectable in neonatal kidney, adult kidney, brain, heart, or spleen.

In terms of biological role, interacts strongly with CDK4 and CDK6. Potent inhibitor. Potential effector of TGF-beta induced cell cycle arrest. In Rattus norvegicus (Rat), this protein is Cyclin-dependent kinase 4 inhibitor B (Cdkn2b).